Consider the following 244-residue polypeptide: DNA repair protein RecO (244 aa).

This sequence belongs to the RecO family.

Involved in DNA repair and RecF pathway recombination. The chain is DNA repair protein RecO from Polynucleobacter necessarius subsp. necessarius (strain STIR1).